We begin with the raw amino-acid sequence, 841 residues long: Transcription regulator protein BACH2 (841 aa).

In terms of domain architecture, BTB spans 37–103 (CDVTLIVERK…AYTAKLLLSR (67 aa)). Disordered regions lie at residues 153 to 173 (HEDCENSAGEEEDEEEETMDS), 204 to 226 (EALLPEPDVPTDTKESSEKDALT), and 246 to 329 (SSHS…AACL). Residues 160–172 (AGEEEDEEEETMD) are compositionally biased toward acidic residues. 2 stretches are compositionally biased toward basic and acidic residues: residues 214–224 (TDTKESSEKDA) and 298–313 (PDAKDRAGDVEMDRKQ). Position 315 is a phosphoserine (Ser315). Glycyl lysine isopeptide (Lys-Gly) (interchain with G-Cter in SUMO2) cross-links involve residues Lys382 and Lys421. Ser521 is subject to Phosphoserine; by RPS6KB1. Residues 583 to 610 (QSYGTNSSDESGSFSEADSESCPVQDRG) form a disordered region. Polar residues predominate over residues 584-598 (SYGTNSSDESGSFSE). Positions 646-709 (FIHDVRRRSK…GELLDNFSCL (64 aa)) constitute a bZIP domain. The segment at 651 to 667 (RRRSKNRIAAQRCRKRK) is basic motif. The tract at residues 671–678 (IQNLECEI) is leucine-zipper. The segment at 777–816 (PGPPWAPSNTSENCTSGRRLEGTDPGTFSERGPPLEPRSQ) is disordered. The Nuclear export signal signature appears at 821–841 (DFCQEMTDKCTTDEQPRKDYT).

This sequence belongs to the bZIP family. CNC subfamily. In terms of assembly, homodimer; disulfide-linked. Heterodimer of BACH2 and Maf-related transcription factors. Phosphorylation at Ser-521 downstream of the PI-3K pathway promotes nuclear export. In terms of processing, the reversible disulfide bond may provide a mechanism to regulate the activity in oxidative stress responses. In terms of tissue distribution, B-cell specific.

It localises to the cytoplasm. The protein resides in the nucleus. Its function is as follows. Transcriptional regulator that acts as a repressor or activator. Binds to Maf recognition elements (MARE). Plays an important role in coordinating transcription activation and repression by MAFK. Induces apoptosis in response to oxidative stress through repression of the antiapoptotic factor HMOX1. Positively regulates the nuclear import of actin. Is a key regulator of adaptive immunity, crucial for the maintenance of regulatory T-cell function and B-cell maturation. This chain is Transcription regulator protein BACH2 (BACH2), found in Homo sapiens (Human).